Reading from the N-terminus, the 152-residue chain is AIG2-like protein D (152 aa).

Y13–A18 contributes to the substrate binding site. The Proton acceptor role is filled by E81.

This sequence belongs to the gamma-glutamylcyclotransferase family. As to expression, expressed mainly in leaves.

Functionally, putative gamma-glutamylcyclotransferase. The polypeptide is AIG2-like protein D (Arabidopsis thaliana (Mouse-ear cress)).